The primary structure comprises 250 residues: Protein lin-28 homolog B (250 aa).

Disordered regions lie at residues Met1–Leu27 and Arg98–Gly126. The span at Gly9 to Glu18 shows a compositional bias: basic and acidic residues. The region spanning His29–Pro102 is the CSD domain. Basic residues predominate over residues Pro114–Lys125. 2 CCHC-type zinc fingers span residues Asp127 to Leu144 and Lys149 to His166. Zn(2+) contacts are provided by Cys129, Cys132, His137, Cys142, Cys151, Cys154, His159, and Cys164. A disordered region spans residues Pro165–Thr250. The segment covering Thr168–Gln177 has biased composition (polar residues). Positions Gly200–Glu209 are enriched in low complexity. Over residues Gly210–Gly219 the composition is skewed to basic and acidic residues.

Belongs to the lin-28 family.

The protein resides in the nucleus. It is found in the nucleolus. In terms of biological role, suppressor of specific microRNA (miRNA) biogenesis. Binds target primary miRNA transcripts and sequester them in the nucleolus, away from the microprocessor complex, hence preventing their processing into mature miRNA. The specific interaction with target pri-miRNAs occurs via an 5'-GGAG-3' motif in the pre-miRNA terminal loop. The protein is Protein lin-28 homolog B (LIN28B) of Gallus gallus (Chicken).